A 356-amino-acid polypeptide reads, in one-letter code: Phosphoserine aminotransferase (356 aa).

R41 contributes to the L-glutamate binding site. Pyridoxal 5'-phosphate contacts are provided by residues 76–77 (AS), W102, T150, D169, and Q192. N6-(pyridoxal phosphate)lysine is present on K193. Residue 234–235 (NT) coordinates pyridoxal 5'-phosphate.

This sequence belongs to the class-V pyridoxal-phosphate-dependent aminotransferase family. SerC subfamily. As to quaternary structure, homodimer. Pyridoxal 5'-phosphate serves as cofactor.

The protein resides in the cytoplasm. It catalyses the reaction O-phospho-L-serine + 2-oxoglutarate = 3-phosphooxypyruvate + L-glutamate. The enzyme catalyses 4-(phosphooxy)-L-threonine + 2-oxoglutarate = (R)-3-hydroxy-2-oxo-4-phosphooxybutanoate + L-glutamate. The protein operates within amino-acid biosynthesis; L-serine biosynthesis; L-serine from 3-phospho-D-glycerate: step 2/3. It participates in cofactor biosynthesis; pyridoxine 5'-phosphate biosynthesis; pyridoxine 5'-phosphate from D-erythrose 4-phosphate: step 3/5. Catalyzes the reversible conversion of 3-phosphohydroxypyruvate to phosphoserine and of 3-hydroxy-2-oxo-4-phosphonooxybutanoate to phosphohydroxythreonine. This Flavobacterium psychrophilum (strain ATCC 49511 / DSM 21280 / CIP 103535 / JIP02/86) protein is Phosphoserine aminotransferase.